The following is a 343-amino-acid chain: Uroporphyrinogen decarboxylase (343 aa).

Substrate is bound by residues arginine 23 to arginine 27, aspartate 73, tyrosine 150, serine 205, and histidine 322.

The protein belongs to the uroporphyrinogen decarboxylase family. Homodimer.

It is found in the cytoplasm. The enzyme catalyses uroporphyrinogen III + 4 H(+) = coproporphyrinogen III + 4 CO2. The protein operates within porphyrin-containing compound metabolism; protoporphyrin-IX biosynthesis; coproporphyrinogen-III from 5-aminolevulinate: step 4/4. In terms of biological role, catalyzes the decarboxylation of four acetate groups of uroporphyrinogen-III to yield coproporphyrinogen-III. The sequence is that of Uroporphyrinogen decarboxylase from Cereibacter sphaeroides (strain KD131 / KCTC 12085) (Rhodobacter sphaeroides).